The primary structure comprises 451 residues: 1,3-beta-glucanosyltransferase PGA4 (451 aa).

An N-terminal signal peptide occupies residues 1–18; the sequence is MLFRSLVTYLSLVSSVLS. Tyr81 contributes to the (1,3-beta-D-glucosyl)n binding site. Asn88 carries N-linked (GlcNAc...) asparagine glycosylation. Residues 108–116, Asn151, Glu152, and Arg198 each bind (1,3-beta-D-glucosyl)n; that span reads NTPHSSITR. The active-site Proton donor is the Glu152. Residue Asn245 is glycosylated (N-linked (GlcNAc...) asparagine). Residue Glu254 is the Nucleophile of the active site. (1,3-beta-D-glucosyl)n is bound at residue Tyr286. Positions 316 to 336 are disordered; that stretch reads SQFEKTKNPSGDGGYLKSTGG. N-linked (GlcNAc...) asparagine glycans are attached at residues Asn347, Asn394, and Asn422. Positions 395–427 are disordered; that stretch reads YTSSITASSRASPSQTSQVSSSSATSANSTSSK. Low complexity predominate over residues 396-426; that stretch reads TSSITASSRASPSQTSQVSSSSATSANSTSS. The GPI-anchor amidated aspartate moiety is linked to residue Asp430. A propeptide spans 431 to 451 (removed in mature form); that stretch reads AAVEGAGFLSVIALAAGIALL.

It belongs to the glycosyl hydrolase 72 family. Post-translationally, the GPI-anchor is attached to the protein in the endoplasmic reticulum and serves to target the protein to the cell surface. There, the glucosamine-inositol phospholipid moiety is cleaved off and the GPI-modified mannoprotein is covalently attached via its lipidless GPI glycan remnant to the 1,6-beta-glucan of the outer cell wall layer.

It is found in the secreted. Its subcellular location is the cell wall. The protein localises to the membrane. Splits internally a 1,3-beta-glucan molecule and transfers the newly generated reducing end (the donor) to the non-reducing end of another 1,3-beta-glucan molecule (the acceptor) forming a 1,3-beta linkage, resulting in the elongation of 1,3-beta-glucan chains in the cell wall. Involved in cell wall biosynthesis and morphogenesis. Plays a key role in virulence. In Candida albicans (strain SC5314 / ATCC MYA-2876) (Yeast), this protein is 1,3-beta-glucanosyltransferase PGA4 (PGA4).